Reading from the N-terminus, the 454-residue chain is Alkaline extracellular protease (454 aa).

A signal peptide spans 1 to 15 (MKLATAFTILTAVLA). A propeptide spanning residues 16 to 157 (APLAAPAPAP…EIPASSNAKR (142 aa)) is cleaved from the precursor. The 79-residue stretch at 68 to 146 (FIVVFDSSAT…TVEPDTIVSL (79 aa)) folds into the Inhibitor I9 domain. Asn123 carries an N-linked (GlcNAc...) asparagine glycan. Positions 166–454 (QWGLSRISHK…NAVAYNGVGI (289 aa)) constitute a Peptidase S8 domain. Residues Asp200, His231, and Ser397 each act as charge relay system in the active site.

It belongs to the peptidase S8 family. The pro-region is removed through cleavage by XPR6 after Lys156-Arg157, which yields mature active XPR2. Post-translationally, the 10 consecutive -X-Ala- or -X-Pro- dipeptides located over 100 amino acids upstream of the N-terminal of mature XPR2 are subject to dipeptidyl aminopeptidase (DPAPase)-processing. DPAPase activity is not necessary for XPR6 cleavage and for secretion of mature active XPR2. In terms of processing, N-glycosylated. Glycosylation within the pro-region has no effect on secretion and maturation at 18 degrees Celsius, but is required for secretion at 28 degrees Celsius.

It is found in the secreted. The enzyme catalyses Hydrolysis of proteins with broad specificity for peptide bonds, and a preference for a large uncharged residue in P1. Hydrolyzes peptide amides.. With respect to regulation, the protease activity is completely inhibited by the serine inhibitor PMSF but is not affected by thiol group inhibitors and in the presence of dithiothreitol. In the presence of high concentrations of o-phenanthroline the protease activity is only partially inhibited. The pro-region plays an inhibitory role and may provide a mechanism for preventing premature activation in the secretory pathway. Major secreted protein that belongs to the subtilisin family serine proteases. This Yarrowia lipolytica (strain CLIB 122 / E 150) (Yeast) protein is Alkaline extracellular protease.